Consider the following 263-residue polypeptide: Troponin T, fast skeletal muscle isoforms (263 aa).

The span at 1–26 (MSDTEEVEHGEEEYEEEAHEAEEVHE) shows a compositional bias: acidic residues. Disordered regions lie at residues 1–66 (MSDT…FDDI), 107–188 (RAER…VLAE), and 243–263 (DQAQKHSKKAGAKGKVGGRWK). An N-acetylserine modification is found at serine 2. Basic and acidic residues-rich tracts occupy residues 56 to 66 (PEGEKVDFDDI), 107 to 149 (RAER…DDLK), and 177 to 188 (TARETKKKVLAE). The segment covering 247-263 (KHSKKAGAKGKVGGRWK) has biased composition (basic residues).

The protein belongs to the troponin T family.

In terms of biological role, troponin T is the tropomyosin-binding subunit of troponin, the thin filament regulatory complex which confers calcium-sensitivity to striated muscle actomyosin ATPase activity. In Gallus gallus (Chicken), this protein is Troponin T, fast skeletal muscle isoforms (TNNT3).